The sequence spans 184 residues: MAYEFVPLKEKYQKEVVPVLMKEFGYKNIHEVPRLVKVVINMGVGEGSRNKDVIEAHARELTTIAGQKAIITKAKKSISNFKIRKGMSVGVKVTLRGPRMYNFVYKLVNLVLPKVRDFRGLNPNSFDGKGNYSFGLTEQLVFPEISPDQIKRIQGMDIVVVTTAKRDEEARRLLELLGFPFKKQ.

The protein belongs to the universal ribosomal protein uL5 family. In terms of assembly, part of the 50S ribosomal subunit; part of the 5S rRNA/L5/L18/L25 subcomplex. Contacts the 5S rRNA and the P site tRNA. Forms a bridge to the 30S subunit in the 70S ribosome.

Functionally, this is one of the proteins that bind and probably mediate the attachment of the 5S RNA into the large ribosomal subunit, where it forms part of the central protuberance. In the 70S ribosome it contacts protein S13 of the 30S subunit (bridge B1b), connecting the 2 subunits; this bridge is implicated in subunit movement. Contacts the P site tRNA; the 5S rRNA and some of its associated proteins might help stabilize positioning of ribosome-bound tRNAs. This Fervidobacterium nodosum (strain ATCC 35602 / DSM 5306 / Rt17-B1) protein is Large ribosomal subunit protein uL5.